Here is a 449-residue protein sequence, read N- to C-terminus: NADH-quinone oxidoreductase subunit H (449 aa).

9 consecutive transmembrane segments (helical) span residues 23 to 43, 93 to 113, 137 to 157, 176 to 196, 209 to 229, 258 to 280, 300 to 320, 332 to 352, and 368 to 388; these read WWVIGLKAVLILVVLLLLTLF, AVYLIAPVIAVIPSFITFSVI, VAVLFVMAIASIGIYGIVLGG, MISYEVAMGLALVAVFLYAGS, LWYGLILVPSFVIYLIAMVGE, ALFFLAEYINMATVSAVATTLFL, YWPLLWFLGKVLFFVFIFIWL, FMAFGWKRLIPVALVWIVAVA, and LLIGIGALAVVFLVLFFIGGA. The span at 427–442 shows a compositional bias: polar residues; sequence RSSPIASSMPQPSAAT. Residues 427–449 form a disordered region; it reads RSSPIASSMPQPSAATRSAGEEI.

Belongs to the complex I subunit 1 family. As to quaternary structure, NDH-1 is composed of 14 different subunits. Subunits NuoA, H, J, K, L, M, N constitute the membrane sector of the complex.

It is found in the cell membrane. The enzyme catalyses a quinone + NADH + 5 H(+)(in) = a quinol + NAD(+) + 4 H(+)(out). In terms of biological role, NDH-1 shuttles electrons from NADH, via FMN and iron-sulfur (Fe-S) centers, to quinones in the respiratory chain. The immediate electron acceptor for the enzyme in this species is believed to be ubiquinone. Couples the redox reaction to proton translocation (for every two electrons transferred, four hydrogen ions are translocated across the cytoplasmic membrane), and thus conserves the redox energy in a proton gradient. This subunit may bind ubiquinone. This Nocardioides sp. (strain ATCC BAA-499 / JS614) protein is NADH-quinone oxidoreductase subunit H.